A 95-amino-acid polypeptide reads, in one-letter code: Large ribosomal subunit protein bL25 (95 aa).

This sequence belongs to the bacterial ribosomal protein bL25 family. Part of the 50S ribosomal subunit; part of the 5S rRNA/L5/L18/L25 subcomplex. Contacts the 5S rRNA. Binds to the 5S rRNA independently of L5 and L18.

This is one of the proteins that binds to the 5S RNA in the ribosome where it forms part of the central protuberance. The protein is Large ribosomal subunit protein bL25 of Glaesserella parasuis serovar 5 (strain SH0165) (Haemophilus parasuis).